Reading from the N-terminus, the 150-residue chain is Small ribosomal subunit protein uS7c (150 aa).

This sequence belongs to the universal ribosomal protein uS7 family. As to quaternary structure, part of the 30S ribosomal subunit.

The protein resides in the plastid. It is found in the chloroplast. Functionally, one of the primary rRNA binding proteins, it binds directly to 16S rRNA where it nucleates assembly of the head domain of the 30S subunit. The chain is Small ribosomal subunit protein uS7c (rps7) from Huperzia lucidula (Shining clubmoss).